A 281-amino-acid chain; its full sequence is MSEEIISFTNPALGPLPTKAPQLPSNVLDLFSLKGKVASVTGSSGGIGWAVAEAFAQAGADVAIWYNSKPADAKAEYLTEKYGVKAKAYKCNVTDPNDVSKVINEIEKDFGTIDIFVANAGVAWTDGPEIDVQGYDQWKKIVDCDLNGVYYCAHTVGQIFKKNKSGSLIITSSMSGTIVNIPQLQAPYNAAKAACTHLAKSLSVEWASFGARVNSISPGYILTDIADFADPEMKKKWWQLTPLGREGLPQELVGAYLYLASNASTYTTGSNIAVDGGYTCP.

NADP(+) is bound by residues I47, K74, and N119. Active-site proton donor residues include S173 and Y188. NADP(+)-binding residues include Y188, K192, I221, and T223. Catalysis depends on K192, which acts as the Lowers pKa of active site Tyr.

This sequence belongs to the short-chain dehydrogenases/reductases (SDR) family. Homotetramer.

The enzyme catalyses D-sorbitol + NADP(+) = keto-L-sorbose + NADPH + H(+). It participates in carbohydrate degradation; L-sorbose degradation. In terms of biological role, catalyzes the NADP dependent reduction of L-sorbose to D-glucitol. Can also convert fructose to mannitol, but less efficiently. This is Sorbose reductase SOU1 (SOU1) from Candida albicans (strain SC5314 / ATCC MYA-2876) (Yeast).